The chain runs to 216 residues: DNA-directed RNA polymerase subunit alpha (216 aa).

This sequence belongs to the RNA polymerase alpha chain family. As to quaternary structure, in plastids the minimal PEP RNA polymerase catalytic core is composed of four subunits: alpha, beta, beta', and beta''. When a (nuclear-encoded) sigma factor is associated with the core the holoenzyme is formed, which can initiate transcription.

The protein localises to the plastid. It is found in the chloroplast. The enzyme catalyses RNA(n) + a ribonucleoside 5'-triphosphate = RNA(n+1) + diphosphate. In terms of biological role, DNA-dependent RNA polymerase catalyzes the transcription of DNA into RNA using the four ribonucleoside triphosphates as substrates. This Euglena gracilis protein is DNA-directed RNA polymerase subunit alpha (rpoA).